Here is a 225-residue protein sequence, read N- to C-terminus: UPF0758 protein BCB4264_A4572 (225 aa).

One can recognise an MPN domain in the interval 103–225 (SIRSPEDCAK…FVSLKEKGHI (123 aa)). Zn(2+) contacts are provided by His-174, His-176, and Asp-187. The JAMM motif motif lies at 174–187 (HNHPSGDPTPSRED).

The protein belongs to the UPF0758 family.

The chain is UPF0758 protein BCB4264_A4572 from Bacillus cereus (strain B4264).